The sequence spans 386 residues: Cytoplasmic 60S subunit biogenesis factor ZNF622 (386 aa).

Position 2 is an N-acetylalanine (Ala2). 2 U1-type zinc fingers span residues 4 to 28 (YTCITCRVAFRDAEMQRAHYKTDWH) and 67 to 91 (TYCTVCSKKFATFNAYENHLKSRRH). A disordered region spans residues 135-237 (AIKAQPSTSP…AEDAEAEESP (103 aa)). The span at 165-176 (GTPERDPTEKPP) shows a compositional bias: basic and acidic residues. Acidic residues predominate over residues 194–235 (EESEEEGEEDDEDWEDIDSDDGLECENPGVEEEDAEDAEAEE). Phosphoserine is present on Ser269.

The protein belongs to the REI1 family. As to quaternary structure, homo- and heterodimer. Associates with pre-60S ribosomal particles. Interacts with MELK and MYBL2. Interacts with DNAJC21. Phosphorylated by MELK. The phosphorylation may redirect the protein to the nucleus. In terms of processing, ubiquitinated by HECTD1, leading to its degradation.

The protein resides in the cytoplasm. It localises to the nucleus. Functionally, pre-60S-associated cytoplasmic factor involved in the cytoplasmic maturation of the 60S subunit. This chain is Cytoplasmic 60S subunit biogenesis factor ZNF622 (Znf622), found in Rattus norvegicus (Rat).